Consider the following 141-residue polypeptide: Hemoglobin subunit alpha-D (141 aa).

In terms of domain architecture, Globin spans 1–141; that stretch reads MLSADEKQLI…VSDVLAEKYR (141 aa). Residues H58 and H87 each contribute to the heme b site.

It belongs to the globin family. In terms of assembly, heterotetramer of two alpha-D chains and two beta chains. In terms of tissue distribution, red blood cells.

Involved in oxygen transport from the lung to the various peripheral tissues. In Phrynops hilarii (Snake-necked turtle), this protein is Hemoglobin subunit alpha-D (HBAD).